The following is a 465-amino-acid chain: Ribulose bisphosphate carboxylase large chain (465 aa).

An N6,N6,N6-trimethyllysine modification is found at K4. Residues N113 and T163 each coordinate substrate. K165 acts as the Proton acceptor in catalysis. K167 contacts substrate. The Mg(2+) site is built by K191, D193, and E194. N6-carboxylysine is present on K191. H284 acts as the Proton acceptor in catalysis. Substrate is bound by residues R285, H317, and S369.

It belongs to the RuBisCO large chain family. Type I subfamily. As to quaternary structure, heterohexadecamer of 8 large chains and 8 small chains; disulfide-linked. The disulfide link is formed within the large subunit homodimers. Mg(2+) serves as cofactor. The disulfide bond which can form in the large chain dimeric partners within the hexadecamer appears to be associated with oxidative stress and protein turnover.

It localises to the plastid. It is found in the chloroplast. It catalyses the reaction 2 (2R)-3-phosphoglycerate + 2 H(+) = D-ribulose 1,5-bisphosphate + CO2 + H2O. The enzyme catalyses D-ribulose 1,5-bisphosphate + O2 = 2-phosphoglycolate + (2R)-3-phosphoglycerate + 2 H(+). In terms of biological role, ruBisCO catalyzes two reactions: the carboxylation of D-ribulose 1,5-bisphosphate, the primary event in carbon dioxide fixation, as well as the oxidative fragmentation of the pentose substrate in the photorespiration process. Both reactions occur simultaneously and in competition at the same active site. This is Ribulose bisphosphate carboxylase large chain from Bursera inaguensis (Elaphrium inaguense).